Reading from the N-terminus, the 588-residue chain is 2-succinyl-5-enolpyruvyl-6-hydroxy-3-cyclohexene-1-carboxylate synthase (588 aa).

Belongs to the TPP enzyme family. MenD subfamily. In terms of assembly, homodimer. Mg(2+) is required as a cofactor. Requires Mn(2+) as cofactor. Thiamine diphosphate serves as cofactor.

The catalysed reaction is isochorismate + 2-oxoglutarate + H(+) = 5-enolpyruvoyl-6-hydroxy-2-succinyl-cyclohex-3-ene-1-carboxylate + CO2. Its pathway is quinol/quinone metabolism; 1,4-dihydroxy-2-naphthoate biosynthesis; 1,4-dihydroxy-2-naphthoate from chorismate: step 2/7. It participates in cofactor biosynthesis; phylloquinone biosynthesis. In terms of biological role, catalyzes the thiamine diphosphate-dependent decarboxylation of 2-oxoglutarate and the subsequent addition of the resulting succinic semialdehyde-thiamine pyrophosphate anion to isochorismate to yield 2-succinyl-5-enolpyruvyl-6-hydroxy-3-cyclohexene-1-carboxylate (SEPHCHC). In Prochlorococcus marinus (strain MIT 9515), this protein is 2-succinyl-5-enolpyruvyl-6-hydroxy-3-cyclohexene-1-carboxylate synthase.